Here is a 1251-residue protein sequence, read N- to C-terminus: ATP-dependent helicase/nuclease subunit A (1251 aa).

The region spanning T5–R481 is the UvrD-like helicase ATP-binding domain. Residue A26–T33 coordinates ATP. Residues T526–G824 form the UvrD-like helicase C-terminal domain. The tract at residues N544–E565 is disordered.

It belongs to the helicase family. AddA subfamily. As to quaternary structure, heterodimer of AddA and AddB/RexB. Mg(2+) is required as a cofactor.

It catalyses the reaction Couples ATP hydrolysis with the unwinding of duplex DNA by translocating in the 3'-5' direction.. The enzyme catalyses ATP + H2O = ADP + phosphate + H(+). The heterodimer acts as both an ATP-dependent DNA helicase and an ATP-dependent, dual-direction single-stranded exonuclease. Recognizes the chi site generating a DNA molecule suitable for the initiation of homologous recombination. The AddA nuclease domain is required for chi fragment generation; this subunit has the helicase and 3' -&gt; 5' nuclease activities. The polypeptide is ATP-dependent helicase/nuclease subunit A (Acetivibrio thermocellus (strain ATCC 27405 / DSM 1237 / JCM 9322 / NBRC 103400 / NCIMB 10682 / NRRL B-4536 / VPI 7372) (Clostridium thermocellum)).